A 321-amino-acid polypeptide reads, in one-letter code: uncharacterized protein (321 aa).

Residues 1–12 (MQGGREVGRESV) show a composition bias toward basic and acidic residues. A disordered region spans residues 1–85 (MQGGREVGRE…GWGEFEGFQE (85 aa)). The span at 53-67 (NANSSRLDEGLSSSR) shows a compositional bias: polar residues.

This is an uncharacterized protein from Rattus norvegicus (Rat).